The following is a 159-amino-acid chain: D-aminoacyl-tRNA deacylase (159 aa).

Positions 146–147 (GP) match the Gly-cisPro motif, important for rejection of L-amino acids motif.

This sequence belongs to the DTD family. As to quaternary structure, homodimer.

Its subcellular location is the cytoplasm. The enzyme catalyses glycyl-tRNA(Ala) + H2O = tRNA(Ala) + glycine + H(+). The catalysed reaction is a D-aminoacyl-tRNA + H2O = a tRNA + a D-alpha-amino acid + H(+). Its function is as follows. An aminoacyl-tRNA editing enzyme that deacylates mischarged D-aminoacyl-tRNAs. Also deacylates mischarged glycyl-tRNA(Ala), protecting cells against glycine mischarging by AlaRS. Acts via tRNA-based rather than protein-based catalysis; rejects L-amino acids rather than detecting D-amino acids in the active site. By recycling D-aminoacyl-tRNA to D-amino acids and free tRNA molecules, this enzyme counteracts the toxicity associated with the formation of D-aminoacyl-tRNA entities in vivo and helps enforce protein L-homochirality. The protein is D-aminoacyl-tRNA deacylase of Bifidobacterium animalis subsp. lactis (strain AD011).